We begin with the raw amino-acid sequence, 334 residues long: Rhomboid-like protein 14, mitochondrial (334 aa).

Residues 1 to 87 (MENFGEGRRS…RLFLSAFYHV (87 aa)) constitute a mitochondrion transit peptide. The next 4 helical transmembrane spans lie at 114–134 (EFASMVFTLIGMSQGVTLLLA), 146–166 (AYYNEYAVGFSGVLFAMKVVL), 176–196 (VYGILVPTKYAAWAELILVQM), and 197–217 (FVPNASFLGHLGGILAGIIYL). The active-site Nucleophile is the Ser156. Catalysis depends on His206, which acts as the Charge relay system. Residues 273 to 302 (GPGIWRCQSCTYDNSGWLSACEMCGSGRAR) form a RanBP2-type zinc finger.

The protein belongs to the peptidase S54 family.

The protein resides in the mitochondrion membrane. In terms of biological role, probable rhomboid-type serine protease that catalyzes intramembrane proteolysis. May function in the heat-shock response pathway. In Arabidopsis thaliana (Mouse-ear cress), this protein is Rhomboid-like protein 14, mitochondrial.